Reading from the N-terminus, the 467-residue chain is Protein PHOSPHATE STARVATION RESPONSE 3 (467 aa).

Residues 227 to 266 (MSLPVSSCSDQEDLQDARSPAKVQLSSSRSSSGTASCNKP) are disordered. Residues 262–322 (SCNKPRLRWT…HLQKYRLAKY (61 aa)) enclose the HTH myb-type domain. The H-T-H motif DNA-binding region spans 293 to 318 (PKGVLKLMKVEGLTIYHIKSHLQKYR). The span at 327–337 (KEDKKQEEKKT) shows a compositional bias: basic and acidic residues. Disordered regions lie at residues 327 to 353 (KEDKKQEEKKTKSVANGNDHAKKKSAQ) and 400 to 467 (RESI…VHDE). A compositionally biased stretch (polar residues) spans 402–412 (SISSMTSTTEG). Composition is skewed to basic and acidic residues over residues 419-428 (PMEKTEDKAE) and 438-467 (RITDTDAECHSKVDNKKTKPQADLEMVHDE).

Its subcellular location is the nucleus. In terms of biological role, transcription factor involved in phosphate starvation signaling. Binds to P1BS, an imperfect palindromic sequence 5'-GNATATNC-3', to promote the expression of inorganic phosphate (Pi) starvation-responsive genes. Functionally redundant with PHR1 and PHR2 in regulating Pi starvation response and Pi homeostasis. The protein is Protein PHOSPHATE STARVATION RESPONSE 3 of Oryza sativa subsp. indica (Rice).